Consider the following 228-residue polypeptide: Large ribosomal subunit protein bL25 (228 aa).

Residues 196 to 228 (EEAAVAEAQSAESAEGKAEAEAEATNEKNKSEA) are disordered. Over residues 209–228 (AEGKAEAEAEATNEKNKSEA) the composition is skewed to basic and acidic residues.

This sequence belongs to the bacterial ribosomal protein bL25 family. CTC subfamily. In terms of assembly, part of the 50S ribosomal subunit; part of the 5S rRNA/L5/L18/L25 subcomplex. Contacts the 5S rRNA. Binds to the 5S rRNA independently of L5 and L18.

Its function is as follows. This is one of the proteins that binds to the 5S RNA in the ribosome where it forms part of the central protuberance. The chain is Large ribosomal subunit protein bL25 from Methylorubrum extorquens (strain PA1) (Methylobacterium extorquens).